A 334-amino-acid polypeptide reads, in one-letter code: MAQYDQLEDKDSLDIHDNPPAPENVVKEDDNTVYFVYDEEVEEEEAPPPPTPEPIVQVNDKPHKFKDHYCKKPKFCDVCARMIVLNNKFALRCKNCKTNIHHSCQSYVQFQRCFGKIPPGFRRAYSSPLYDQEINNPGQQNRTDPVFDTLRVGVIMANKERKKGSEDKKNMMMMMMEEEEAQQPKEDEEGAEGKQDGDKKDKTATDDKNKKQQQTFSQSHYYMALYRFKAIEKDDLDFHPGDRITVLDDSNEEWWRGKIGEKTGYLPMTYIIRVRAGERVYKVTRSFVGNREMGQITLKKDQIVVKKGEEVNGYLKVSTGRKLGFFPADLLHEL.

The segment at 1–26 (MAQYDQLEDKDSLDIHDNPPAPENVV) is disordered. The span at 7 to 17 (LEDKDSLDIHD) shows a compositional bias: basic and acidic residues. A Phorbol-ester/DAG-type zinc finger spans residues 62 to 113 (PHKFKDHYCKKPKFCDVCARMIVLNNKFALRCKNCKTNIHHSCQSYVQFQRC). Over residues 178–190 (EEEAQQPKEDEEG) the composition is skewed to acidic residues. Residues 178 to 215 (EEEAQQPKEDEEGAEGKQDGDKKDKTATDDKNKKQQQT) are disordered. Residues 191–210 (AEGKQDGDKKDKTATDDKNK) are compositionally biased toward basic and acidic residues. SH3 domains lie at 217 to 276 (SQSH…RVRA) and 277 to 334 (GERV…LHEL).

In terms of assembly, component of a calcium channel complex with CACNA1S. Expressed in muscles at the muscle triad.

Its subcellular location is the cytoplasm. The protein localises to the cell membrane. It localises to the sarcolemma. It is found in the T-tubule. Its function is as follows. Required for normal excitation-contraction coupling in skeletal muscle and for normal muscle contraction in response to membrane depolarization. Required for normal Ca(2+) release from the sarcplasmic reticulum, which ultimately leads to muscle contraction. Probably functions via its effects on muscle calcium channels. Increases CACNA1S channel activity, in addition to its role in enhancing the expression of CACNA1S at the cell membrane. Has a redundant role in promoting the expression of the calcium channel CACNA1S at the cell membrane. The polypeptide is SH3 and cysteine-rich domain-containing protein 3 (Danio rerio (Zebrafish)).